Reading from the N-terminus, the 99-residue chain is Integration host factor subunit beta (99 aa).

The protein belongs to the bacterial histone-like protein family. Heterodimer of an alpha and a beta chain.

This protein is one of the two subunits of integration host factor, a specific DNA-binding protein that functions in genetic recombination as well as in transcriptional and translational control. This is Integration host factor subunit beta from Rhizobium etli (strain CIAT 652).